Consider the following 224-residue polypeptide: Phosphoglycolate phosphatase (224 aa).

The Nucleophile role is filled by aspartate 11. Residues aspartate 11, aspartate 13, and aspartate 177 each coordinate Mg(2+).

This sequence belongs to the HAD-like hydrolase superfamily. CbbY/CbbZ/Gph/YieH family. The cofactor is Mg(2+).

It catalyses the reaction 2-phosphoglycolate + H2O = glycolate + phosphate. It participates in organic acid metabolism; glycolate biosynthesis; glycolate from 2-phosphoglycolate: step 1/1. Specifically catalyzes the dephosphorylation of 2-phosphoglycolate. Is involved in the dissimilation of the intracellular 2-phosphoglycolate formed during the DNA repair of 3'-phosphoglycolate ends, a major class of DNA lesions induced by oxidative stress. This Haemophilus influenzae (strain 86-028NP) protein is Phosphoglycolate phosphatase.